Here is a 443-residue protein sequence, read N- to C-terminus: Thymidine phosphorylase (443 aa).

It belongs to the thymidine/pyrimidine-nucleoside phosphorylase family. In terms of assembly, homodimer.

The catalysed reaction is thymidine + phosphate = 2-deoxy-alpha-D-ribose 1-phosphate + thymine. Its pathway is pyrimidine metabolism; dTMP biosynthesis via salvage pathway; dTMP from thymine: step 1/2. In terms of biological role, the enzymes which catalyze the reversible phosphorolysis of pyrimidine nucleosides are involved in the degradation of these compounds and in their utilization as carbon and energy sources, or in the rescue of pyrimidine bases for nucleotide synthesis. This chain is Thymidine phosphorylase, found in Photobacterium profundum (strain SS9).